The primary structure comprises 445 residues: MSLWLEAAVPDVSPDSATELWKTEPQDAGDQGGNTCILREEARMPQSTGGALRIGLESSEPTALLPRAETLPEPTELRPQKRKKGPAPKMLGNELCSVCGDKASAFHYNVLSCEGCKGFFRRSVIKGARYICHSGGHCPMDTYMRRKCQECRLRKCRHAGMREECVLSEEQIRLKKLKRQEEEQAQATSVSPRVSSPPQVLPQLSPEQLGMIEKLVAAQQQCNRRSFSDRLRVTPWPIAPDPQSREARQQRFAHFTELAIVSVQEIVDFAKQLPGFLQLSREDQIALLKTSAIEVMLLETSRRYNPGSESITFLKDFSYNREDFAKAGLQVEFINPIFEFSRSMNELQLNDAEFALLIAISIFSADRPNVQDQLQVERLQHTYVEALHAYVSINHPHDRLMFPRMLMKLVSLRTLSSVHSEQVFALRLQDKKLPPLLSEIWDVHE.

2 disordered regions span residues 1 to 34 (MSLW…QGGN) and 62 to 86 (TALL…KKGP). Residues 1-94 (MSLWLEAAVP…GPAPKMLGNE (94 aa)) form a transactivation AF-1; required for ligand-independent transactivation function region. Positions 93–168 (NELCSVCGDK…AGMREECVLS (76 aa)) form a DNA-binding region, nuclear receptor. 2 consecutive NR C4-type zinc fingers follow at residues 96-116 (CSVC…CEGC) and 132-156 (CHSG…LRKC). The interval 178 to 200 (KRQEEEQAQATSVSPRVSSPPQV) is disordered. Low complexity predominate over residues 189–200 (SVSPRVSSPPQV). Residue Ser191 is modified to Phosphoserine. The tract at residues 203 to 445 (QLSPEQLGMI…LLSEIWDVHE (243 aa)) is transactivation AF-2; required for ligand-dependent transactivation function; mediates interaction with CCAR2. One can recognise an NR LBD domain in the interval 207 to 445 (EQLGMIEKLV…LLSEIWDVHE (239 aa)).

This sequence belongs to the nuclear hormone receptor family. NR1 subfamily. As to quaternary structure, heterodimer of NR1H3 and RXR (retinoic acid receptor). Interacts with CCAR2 (via N-terminus) in a ligand-independent manner. Interacts with SIRT1 and this interaction is inhibited by CCAR2. Post-translationally, ubiquitinated by UBR5, leading to its degradation: UBR5 specifically recognizes and binds ligand-bound NR1H3 when it is not associated with coactivators (NCOAs). In presence of NCOAs, the UBR5-degron is not accessible, preventing its ubiquitination and degradation. In terms of tissue distribution, in adults it is expressed in spleen, pituitary, lung, liver, and fat. Weaker expression is observed in several other tissues.

The protein resides in the nucleus. The protein localises to the cytoplasm. Its function is as follows. Nuclear receptor that exhibits a ligand-dependent transcriptional activation activity. Interaction with retinoic acid receptor (RXR) shifts RXR from its role as a silent DNA-binding partner to an active ligand-binding subunit in mediating retinoid responses through target genes defined by LXRES. LXRES are DR4-type response elements characterized by direct repeats of two similar hexanuclotide half-sites spaced by four nucleotides. Plays an important role in the regulation of cholesterol homeostasis, regulating cholesterol uptake through MYLIP-dependent ubiquitination of LDLR, VLDLR and LRP8. Interplays functionally with RORA for the regulation of genes involved in liver metabolism. Induces LPCAT3-dependent phospholipid remodeling in endoplasmic reticulum (ER) membranes of hepatocytes, driving SREBF1 processing and lipogenesis. Via LPCAT3, triggers the incorporation of arachidonate into phosphatidylcholines of ER membranes, increasing membrane dynamics and enabling triacylglycerols transfer to nascent very low-density lipoprotein (VLDL) particles. Via LPCAT3 also counteracts lipid-induced ER stress response and inflammation, likely by modulating SRC kinase membrane compartmentalization and limiting the synthesis of lipid inflammatory mediators. The sequence is that of Oxysterols receptor LXR-alpha (Nr1h3) from Rattus norvegicus (Rat).